We begin with the raw amino-acid sequence, 309 residues long: Ribonuclease Z (309 aa).

Zn(2+) contacts are provided by His63, His65, Asp67, His68, His141, Asp212, and His270. Asp67 functions as the Proton acceptor in the catalytic mechanism.

This sequence belongs to the RNase Z family. In terms of assembly, homodimer. Zn(2+) serves as cofactor.

The catalysed reaction is Endonucleolytic cleavage of RNA, removing extra 3' nucleotides from tRNA precursor, generating 3' termini of tRNAs. A 3'-hydroxy group is left at the tRNA terminus and a 5'-phosphoryl group is left at the trailer molecule.. Its function is as follows. Zinc phosphodiesterase, which displays some tRNA 3'-processing endonuclease activity. Probably involved in tRNA maturation, by removing a 3'-trailer from precursor tRNA. This is Ribonuclease Z from Limosilactobacillus reuteri (strain DSM 20016) (Lactobacillus reuteri).